The primary structure comprises 1645 residues: MSINAVDSKKLVEALLGDLRLLSQEAKKKQNHVKESAETGVVRIRNISTASVGDTVLITNLRAACTELLHPLVLACETRHTRLVQIALQGIQRLVQHRILSGNGATIVTNELWALVEAECEELRVLQTVPPLVSSELIVTGNTLAKCVVMCFRLHFAKDPIVINAASAAVRQLVSTVFERVIQEDGIFSSELTVVNPSGGRPSPRAAPPTLRPCAADAYMLFKDLCLLINGEAPTWLVGIQEMTRTLGLELLESLLKGYPSVFIRHTEFGDLLKDDVCPLIIRLFSPNVKAMHINSQHPSSRISNASMSNYPPTVSHDRQSFPISMRLVRIVTLLVQFYQNILHTECEIFISTLLKFVDGDRKGWQRPLALESLHRIISSTDLVKWMTESFDCRPNSTHVLEQVAVELSVVVQQCLVCTTFSSDQDNELDRSQEDGGPGFLVKGLWVPYVEHLTSKKTILLDSLDRMDAVAISEGYVLSRCCVALCDLTQAVYAVIDRLCVLDENCEAGSSEENLRIAKVAYANTQPSILAAIGSLLAASTDEIVSDQLLCCLSTLISAGCRVGADQDLHRSVYVLAIMSLPSPSYLNQFAGIPPPSPVSKREVSISEQVFDLESWPSTAQVTATGPPCPCPVVSTDLWNKQVLLTSKNLQAARTFIASITTHIKELNGLWYLCMATCEHLSWLLAMRPTQIGQFERETRDDHSNGPTVVTNAALGDIGMLSSLMDKVAPAIAALPNEEFLLVVDALIRLSDESLAVAATGRDSSLFPLAVLYRVCSLSLSGINVFWAKVANHFIKVCNHTSVSMRDWAAVALTSLAKHAIKSKTSMDPKSQQEMVIASLLALCSIPHIQVRRRQLDCVMSLMQTDGSSLLSTSWPNVIQIISSIIDNDTGCELSLVRQGYLGLRLVSSDFLQSIPFDCISGLVEAISRYSKQNTDQNISLSALTLLWTISDFIYRKMESVGNDASEAVWMVLYTCLSESCVDTRFAVRKSACQTLLQTVTAHGHALRAPAWHHVIWQIIIPLLDKVRSQTRCASTEKSNGELIMHHSRDTEQKQWTETCIHTLSAISKIFNSQRKSLLALNDFGAVWEAFLGYLDWAACYENAELSLSAIRSYQEVLLGKISSQTLNVNSHEKSNGSESTLDTVAPELPQAQWVESWKVWLRISRGLARQGCAAVANSVNADTKSTSSTPRMNSSTSSLTSLAPGVYVPGPSHLTAILHIFPPLFDKVAKCITVDDLKYESLPAVLESMMNVPIPSEQAPFVLPSSTTHLTPTQEALLEAVKIVYVECTISGTTLRTAIPDQIRLLLKFASMATQRISPNKVAPGGQKSYRDYALTAIVPFSEYSLRIAIEFFTSTSQYPDVSNSLIAINIIKFLGEPLYMKYTCISASTWKLAASSLMSVLRTSIPYARQNPEVFRSLWSTICDTMERWLFTPNKSSRLAADERKRDELMECQAIEIIRNEMLAYASRLPQEDVQRLISLLHRGSISQIDSTDVLDSHTQRNELAKACFDALLMSTDGAQAGAEEDDHRGILGNVAVTSLLQRCTQVMADFCKDWSAAGDLRLPRSRILEIISALQAIDSLIARLARDPRMTELYSQLVSLFPSVVDVMPCCHADGQLEQQLIKTIKSYQTLFLLQNIPQSTV.

Belongs to the MON2 family.

In terms of biological role, may be required for traffic between late Golgi and early endosomes. This chain is Protein MON2 homolog, found in Caenorhabditis briggsae.